Reading from the N-terminus, the 178-residue chain is ATP synthase subunit delta (178 aa).

It belongs to the ATPase delta chain family. In terms of assembly, F-type ATPases have 2 components, F(1) - the catalytic core - and F(0) - the membrane proton channel. F(1) has five subunits: alpha(3), beta(3), gamma(1), delta(1), epsilon(1). F(0) has three main subunits: a(1), b(2) and c(10-14). The alpha and beta chains form an alternating ring which encloses part of the gamma chain. F(1) is attached to F(0) by a central stalk formed by the gamma and epsilon chains, while a peripheral stalk is formed by the delta and b chains.

Its subcellular location is the cell membrane. Its function is as follows. F(1)F(0) ATP synthase produces ATP from ADP in the presence of a proton or sodium gradient. F-type ATPases consist of two structural domains, F(1) containing the extramembraneous catalytic core and F(0) containing the membrane proton channel, linked together by a central stalk and a peripheral stalk. During catalysis, ATP synthesis in the catalytic domain of F(1) is coupled via a rotary mechanism of the central stalk subunits to proton translocation. Functionally, this protein is part of the stalk that links CF(0) to CF(1). It either transmits conformational changes from CF(0) to CF(1) or is implicated in proton conduction. This is ATP synthase subunit delta from Geobacillus stearothermophilus (Bacillus stearothermophilus).